Reading from the N-terminus, the 220-residue chain is 7-carboxy-7-deazaguanine synthase (220 aa).

Substrate is bound by residues 16-18 (IQG) and Arg31. The region spanning 22–215 (FAGWPCAFVR…LQLHKYIWNP (194 aa)) is the Radical SAM core domain. Residues Cys35, Cys39, and Cys42 each coordinate [4Fe-4S] cluster. Thr44 lines the Mg(2+) pocket. Thr74 is a binding site for substrate. Gly76 is a binding site for S-adenosyl-L-methionine.

It belongs to the radical SAM superfamily. 7-carboxy-7-deazaguanine synthase family. In terms of assembly, homodimer. [4Fe-4S] cluster serves as cofactor. Requires S-adenosyl-L-methionine as cofactor. It depends on Mg(2+) as a cofactor.

It carries out the reaction 6-carboxy-5,6,7,8-tetrahydropterin + H(+) = 7-carboxy-7-deazaguanine + NH4(+). It functions in the pathway purine metabolism; 7-cyano-7-deazaguanine biosynthesis. Catalyzes the complex heterocyclic radical-mediated conversion of 6-carboxy-5,6,7,8-tetrahydropterin (CPH4) to 7-carboxy-7-deazaguanine (CDG), a step common to the biosynthetic pathways of all 7-deazapurine-containing compounds. The protein is 7-carboxy-7-deazaguanine synthase of Chlorobaculum tepidum (strain ATCC 49652 / DSM 12025 / NBRC 103806 / TLS) (Chlorobium tepidum).